Reading from the N-terminus, the 261-residue chain is Kallikrein 1-related peptidase b11 (261 aa).

Positions 1–18 (MWFLILFLALSLGGIDAA) are cleaved as a signal peptide. Positions 19 to 24 (PPVQSR) are cleaved as a propeptide — activation peptide. The 234-residue stretch at 25–258 (IVGGFNCEKN…FTNWIKDTMA (234 aa)) folds into the Peptidase S1 domain. 5 disulfide bridges follow: Cys31–Cys173, Cys50–Cys66, Cys152–Cys219, Cys184–Cys198, and Cys209–Cys234. Residue His65 is the Charge relay system of the active site. Residue Asn102 is glycosylated (N-linked (GlcNAc...) asparagine). Asp120 serves as the catalytic Charge relay system. Ser213 serves as the catalytic Charge relay system.

Belongs to the peptidase S1 family. Kallikrein subfamily.

The enzyme catalyses Preferential cleavage of Arg-|-Xaa bonds in small molecule substrates. Highly selective action to release kallidin (lysyl-bradykinin) from kininogen involves hydrolysis of Met-|-Xaa or Leu-|-Xaa.. In terms of biological role, glandular kallikreins cleave Met-Lys and Arg-Ser bonds in kininogen to release Lys-bradykinin. The polypeptide is Kallikrein 1-related peptidase b11 (Klk1b11) (Mus musculus (Mouse)).